The primary structure comprises 374 residues: DNA replication and repair protein RecF (374 aa).

Residue 34–41 (GNNGAGKT) participates in ATP binding.

Belongs to the RecF family.

It is found in the cytoplasm. In terms of biological role, the RecF protein is involved in DNA metabolism; it is required for DNA replication and normal SOS inducibility. RecF binds preferentially to single-stranded, linear DNA. It also seems to bind ATP. The protein is DNA replication and repair protein RecF of Rhizobium etli (strain CIAT 652).